Reading from the N-terminus, the 637-residue chain is Early transcription factor 70 kDa subunit (637 aa).

A Helicase ATP-binding domain is found at 32–185 (RTIIDENRSV…GHIIDLMSEE (154 aa)). An ATP-binding site is contributed by 45–52 (HIMGSGKT). Residues 135-138 (DEAH) carry the DEXH box motif. Positions 327-507 (KFKYFINRIQ…VLPFDIKKLL (181 aa)) constitute a Helicase C-terminal domain.

Belongs to the helicase family. VETF subfamily. In terms of assembly, heterodimer of a 70 kDa and a 82 kDa subunit. Part of the early transcription complex composed of ETF, RAP94/OPG109, and the DNA-directed RNA polymerase.

The protein localises to the virion. Its function is as follows. Acts with RNA polymerase to initiate transcription from early gene promoters. Is recruited by the RPO-associated protein of 94 kDa RAP94/OPG109 to form the early transcription complex, which also contains the core RNA polymerase. ETF heterodimer binds to early gene promoters. The chain is Early transcription factor 70 kDa subunit (OPG118) from Homo sapiens (Human).